The chain runs to 444 residues: MAERKYFGTDGVRGKVGQFPITPDFALKLGWAAGKILATQGTKQVLIGKDTRISGYMLESALEAGLAAAGLSAAFVGPMPTPAVAYLTRTFRAEAGIVISASHNPYYDNGIKFFSANGEKLPDEVEEAIEALLDQPMDYVESDQLGKAIRINDAAGRYIEFCKGTFPADASLKGYKIVVDCAHGATYHIAPNVMRELGAEVIEIGTHPNGLNINDKCGATDISALQQAVLTSKADLGVAYDGDGDRIIMVDHLGNKVDGDQILFIIAREALRSGKLKGGVVGTLMSNMGLEIALKHLAIPFTRANVGDRYVLEQLKEKNWKLGGENSGHIIVLDKNTTGDGIIASLEVLAAMEAHKMSLNDLTHAVPLFPQVLLNVRFDGGNNPLENAAVKALAKDIETRLVGKGRILLRKSGTEPLIRVMVECEDAVLAQQYAEEIVSAIQNH.

The active-site Phosphoserine intermediate is the serine 102. Residues serine 102, aspartate 241, aspartate 243, and aspartate 245 each coordinate Mg(2+). A Phosphoserine modification is found at serine 102.

It belongs to the phosphohexose mutase family. Mg(2+) serves as cofactor. Activated by phosphorylation.

The enzyme catalyses alpha-D-glucosamine 1-phosphate = D-glucosamine 6-phosphate. In terms of biological role, catalyzes the conversion of glucosamine-6-phosphate to glucosamine-1-phosphate. This Haemophilus ducreyi (strain 35000HP / ATCC 700724) protein is Phosphoglucosamine mutase.